Reading from the N-terminus, the 400-residue chain is Endoglucanase A (400 aa).

Positions 1–32 (MTKTFKKFSIAGLALLFMATAAFAGWSTKASA) are cleaved as a signal peptide. Glu187 acts as the Proton donor in catalysis. Residue Glu328 is the Nucleophile of the active site.

Belongs to the glycosyl hydrolase 5 (cellulase A) family.

Its subcellular location is the secreted. The enzyme catalyses Endohydrolysis of (1-&gt;4)-beta-D-glucosidic linkages in cellulose, lichenin and cereal beta-D-glucans.. Strongly inhibited by Hg(2+), Ag(+) and Fe(3+). To a lesser extent, is also inhibited by Pb(2+), Mn(2+), Sn(2+) and Cu(2+). By contrast, Ni(2+), Zn(2+), Co(2+), Ba(2+) and NH(4)(+) do not affect enzyme activity, while 10 mM Ca(2+), and Mg(2+) produce a stimulating effect. Is also strongly inhibited by chemicals such as N-bromosuccinimide and dimethyl(2-dihydroxy-5-nitrobenzyl)sulphonium bromide. Is not affected by N-acetylimidazole. In terms of biological role, endoglucanase with high activity on carboxymethylcellulose (CMC) and lichenan, but not active on Avicel. The polypeptide is Endoglucanase A (celA) (Paenibacillus barcinonensis).